The sequence spans 272 residues: HMP-PP phosphatase (272 aa).

The active-site Nucleophile is D8. Mg(2+) is bound by residues D8, D10, and D212.

Belongs to the HAD-like hydrolase superfamily. Cof family. Requires Mg(2+) as cofactor.

The catalysed reaction is 4-amino-2-methyl-5-(diphosphooxymethyl)pyrimidine + H2O = 4-amino-2-methyl-5-(phosphooxymethyl)pyrimidine + phosphate + H(+). Catalyzes the hydrolysis of 4-amino-2-methyl-5-hydroxymethylpyrimidine pyrophosphate (HMP-PP) to 4-amino-2-methyl-5-hydroxymethylpyrimidine phosphate (HMP-P). In Salmonella agona (strain SL483), this protein is HMP-PP phosphatase.